A 133-amino-acid chain; its full sequence is DNA-binding protein inhibitor ID-2-A (133 aa).

The bHLH domain occupies 23-75 (ARSKTPVDDPMSLLYNMNDCYSKLKELVPSIPQNKKVSKMEILQHVIDYILDL). The short motif at 106-115 (LNTDISILSL) is the Nuclear export signal element.

Heterodimer with other HLH proteins. As to expression, in the embryo, expressed in a range of tissues, with primary expression in the developing pronephros; expressed in the pronephric anlage, and by the swimming tadpole stages expressed robustly in the pronephric tubules and weakly in the pronephric duct. Expressed in the secondary heart field. In the developing nervous system, expressed in the neural crest and in the neural folds during neurula stages, and at stage 20 in the neural tube, ventral mesoderm and mid-hindbrain boundary. By early tailbud stages, expressed in the neural tube, somites and branchial arches. In tadpoles (stage 37/38), expressed in the heart, eye, otic vesicle, somites and branchial arches. Also expressed in migrating muscle cells. Expressed at a low level in limbs, with expression decreasing as limbs develop, but expressed at a high level in blastemas (regenerated limbs), where expression is localized primarily to the blastemal epidermis. Widely expressed in adults with highest expression in the spleen, skin, intestine and brain, and at a much lower level in testis and heart.

The protein resides in the cytoplasm. The protein localises to the nucleus. Transcriptional regulator (lacking a basic DNA binding domain) which negatively regulates the basic helix-loop-helix (bHLH) transcription factors by forming heterodimers and inhibiting their DNA binding and transcriptional activity. Inhibits the activity of both neurogenic (neurod1/neuroD) and myogenic (myod1/myoD) bHLH factors. May play a role in the regulation of the circadian clock. The chain is DNA-binding protein inhibitor ID-2-A (id2-a) from Xenopus laevis (African clawed frog).